The sequence spans 241 residues: uncharacterized protein (241 aa).

A run of 5 helical transmembrane segments spans residues 7 to 27, 37 to 57, 72 to 92, 110 to 130, and 138 to 158; these read LIFLLFVIVVSYIFNGLWSVF, LFLLIAFHPQHLDGLIILLLI, IIALVGILLTIIKGVIKSGFG, INLVVFSILLTSVYVLGYVAF, and FGTLYTAFGGLALLGAGIKII.

It localises to the cell membrane. This is an uncharacterized protein from Methanocaldococcus jannaschii (strain ATCC 43067 / DSM 2661 / JAL-1 / JCM 10045 / NBRC 100440) (Methanococcus jannaschii).